The chain runs to 155 residues: HTH-type transcriptional regulator IscR (155 aa).

In terms of domain architecture, HTH rrf2-type spans 2-136 (KLSTKGRYAM…HQTRLSDIIK (135 aa)). The H-T-H motif DNA-binding region spans 30-53 (LAEVSKRQDISLPYLEQLFVKLRR). The tract at residues 141–145 (PCPAV) is heme regulatory motif (HRM). C142 is a binding site for [2Fe-2S] cluster.

The cofactor is [2Fe-2S] cluster.

Regulates the transcription of several operons and genes involved in the biogenesis of Fe-S clusters and Fe-S-containing proteins. Functions as a transcriptional repressor of genes involved in iron metabolism by directly binding to the promoter region of genes preceded by the Iron-Rhodo-box motif. Binds to iscR and hemP promoter regions independently of an Fe-S cluster, but their transcriptional repression is Fe-S cluster-dependent. Seems to activate some target genes in a Fe-S cluster-independent manner. Negatively regulates its own transcription in the presence of iron only. The polypeptide is HTH-type transcriptional regulator IscR (Cereibacter sphaeroides (strain ATCC 17023 / DSM 158 / JCM 6121 / CCUG 31486 / LMG 2827 / NBRC 12203 / NCIMB 8253 / ATH 2.4.1.) (Rhodobacter sphaeroides)).